A 541-amino-acid polypeptide reads, in one-letter code: MTVMEHKKAAQLDLSQHGLSNVTEVLRNPSYDVLFEEETRPDLEGYERGVMTELGSVAVDTGIFTGRSPKDKYIVKDETTKDTLWWSDQGKNDNKAITPAVWDDLKALVTEQLSGKRLFVIDGFCGANPDTRLSVRVITEVAWQAHFVKNMFIRPTDEELESFEPDFVVMNGAKATNPNYEAQGLNSENFVAFNLTERVQIIGGTWYGGEMKKGMFAMMNYLLPLKGIASMHCSANVGKEGDVAVFFGLSGTGKTTLSTDPKRQLIGDDEHGWDDDGIFNFEGGCYAKTIRLSKEAEPDIFNAIRRDALLENVTVRNDGSIDFDDGSKTENTRVSYPIYHIDNIVKPISKAGHANKVIFLTADAFGVLPPVAKLTPEQTKYHFLSGFTAKLAGTERGITEPTPTFSAAFGAAFLTLHPTQYAEVLVKRMEAAGAEAYIVNTGWNGTGKRISIQDTRGIIDAILDGSIDNVETKNIPVFNLEVPTSLPGVDTSILDPRDTYTDPLQWDSKAEDLAQRFIKNFAQYTDNDEGKALVKAGPQLD.

3 residues coordinate substrate: Arg67, Tyr207, and Lys213. ATP contacts are provided by residues Lys213, His232, and Gly248 to Thr256. Mn(2+)-binding residues include Lys213 and His232. Residue Asp269 participates in Mn(2+) binding. ATP is bound by residues Glu297, Arg333, Arg449–Ile450, and Thr455. Substrate is bound at residue Arg333.

Belongs to the phosphoenolpyruvate carboxykinase (ATP) family. As to quaternary structure, monomer. Mn(2+) serves as cofactor.

The protein resides in the cytoplasm. The enzyme catalyses oxaloacetate + ATP = phosphoenolpyruvate + ADP + CO2. The protein operates within carbohydrate biosynthesis; gluconeogenesis. Functionally, involved in the gluconeogenesis. Catalyzes the conversion of oxaloacetate (OAA) to phosphoenolpyruvate (PEP) through direct phosphoryl transfer between the nucleoside triphosphate and OAA. This is Phosphoenolpyruvate carboxykinase (ATP) from Aliivibrio salmonicida (strain LFI1238) (Vibrio salmonicida (strain LFI1238)).